The following is a 196-amino-acid chain: PRADC1-like protein (196 aa).

The first 18 residues, 1-18 (MLIAWLVLAATLSRSIRA), serve as a signal peptide directing secretion. Positions 73-171 (ITDPPGACQE…STLQRLKRVH (99 aa)) constitute a PA domain. N179 is a glycosylation site (N-linked (GlcNAc...) asparagine).

It is found in the secreted. Its function is as follows. May be involved in iversification of muscle cell fates. In Drosophila melanogaster (Fruit fly), this protein is PRADC1-like protein.